A 314-amino-acid polypeptide reads, in one-letter code: Pathogenicity locus probable regulatory protein HrpR (314 aa).

The Sigma-54 factor interaction domain occupies 11–239 (TRWNVTALSA…LKSAANAICP (229 aa)). Residues 39 to 46 (GETGTGKD) and 101 to 110 (SNGGTLYLDE) contribute to the ATP site. Positions 281-300 (FDAVLEELELPRRTLYHRMK) form a DNA-binding region, H-T-H motif.

Its function is as follows. Member of the two-component regulatory system HrpR/HrpS that regulates the activation of the sigma factor hrpL which itself induces the expression of hprD as well as other hrp loci which are involved in plant pathogenicity, hrmA and avr genes. Probably interacts with sigma-54. The chain is Pathogenicity locus probable regulatory protein HrpR (hrpR) from Pseudomonas syringae pv. syringae.